The chain runs to 587 residues: Pescadillo homolog (587 aa).

Residues 267 to 306 (LKKKEEKNDEEGKNLSKKELNKAIKADQEQQENDEQDNNN) adopt a coiled-coil conformation. The interval 290 to 311 (IKADQEQQENDEQDNNNGESVE) is disordered. A compositionally biased stretch (acidic residues) spans 295 to 311 (EQQENDEQDNNNGESVE). Positions 335-434 (STAELFSKFI…ELINVNEYAA (100 aa)) constitute a BRCT domain. The disordered stretch occupies residues 437-587 (TLPPHLSPWG…KKKEQLKKLN (151 aa)). Over residues 459–494 (KEDGEAEEDTDEEEEEVEIEDGDEDQEDEEEEEDED) the composition is skewed to acidic residues. A coiled-coil region spans residues 470 to 587 (EEEEEVEIED…KKKEQLKKLN (118 aa)). 3 stretches are compositionally biased toward basic and acidic residues: residues 529–541 (SNKE…ELKK), 559–569 (IEKKENREKQL), and 578–587 (KKKEQLKKLN).

It belongs to the pescadillo family. As to quaternary structure, component of the NOP7 complex, composed of ERB1, NOP7 and YTM1. The complex is held together by ERB1, which interacts with NOP7 via its N-terminal domain and with YTM1 via a high-affinity interaction between the seven-bladed beta-propeller domains of the 2 proteins. The NOP7 complex associates with the 66S pre-ribosome.

It is found in the nucleus. The protein resides in the nucleolus. It localises to the nucleoplasm. Its function is as follows. Component of the NOP7 complex, which is required for maturation of the 25S and 5.8S ribosomal RNAs and formation of the 60S ribosome. Required for the transition from hyphal to yeast growth. The chain is Pescadillo homolog from Candida albicans (strain SC5314 / ATCC MYA-2876) (Yeast).